A 1052-amino-acid chain; its full sequence is Mitotic checkpoint serine/threonine-protein kinase BUB1 beta (1052 aa).

The BUB1 N-terminal domain maps to 56 to 219; it reads FESEIRFYSG…LEPSEPQRSS (164 aa). A Nuclear localization signal motif is present at residues 105–112; it reads GETRYYND. Residues 146–179 form a necessary for interaction with KNL1 region; that stretch reads AQFYISWAEEYEARENFKKADIIFQEGIERKAEP. Disordered regions lie at residues 206–256 and 272–327; these read EEEA…NAVP and ADTA…TSIP. The D-box motif lies at 217–225; that stretch reads RSSLAELKS. At K243 the chain carries N6-acetyllysine; by PCAF. S360 is modified (phosphoserine). A disordered region spans residues 361–381; the sequence is TRKPGREEGDPLQRVQSHQQG. S428 is modified (phosphoserine). The disordered stretch occupies residues 496-552; that stretch reads SNPREISPAENILQEQPDSKGSSMPFSIFDESLSDKKDKSPATGGPQVLNAQRRPLS. The segment covering 508–520 has biased composition (polar residues); sequence LQEQPDSKGSSMP. A phosphoserine mark is found at S535 and S659. At S665 the chain carries Phosphoserine; by PLK1. S686 is subject to Phosphoserine. The region spanning 756–1040 is the Protein kinase domain; that stretch reads VIKQEHLTCD…TISPEALLTQ (285 aa). 762-770 serves as a coordination point for ATP; the sequence is LTCDDYRLF. T781 is subject to Phosphothreonine; by PLK1. Position 784 (K784) interacts with ATP. Catalysis depends on D871, which acts as the Proton acceptor. T998 carries the phosphothreonine; by PLK1 modification. Residues S1033 and S1050 each carry the phosphoserine modification.

It belongs to the protein kinase superfamily. Ser/Thr protein kinase family. BUB1 subfamily. As to quaternary structure, interacts with CENPE. Interacts with PLK1. Part of a complex containing BUB3, CDC20 and BUB1B. Interacts with anaphase-promoting complex/cyclosome (APC/C). Interacts with KNL1. Interacts with KAT2B. Interacts with RIPK3. Interacts with the closed conformation form of MAD2L1. Interacts with CDC20. In terms of processing, proteolytically cleaved by caspase-3 in a cell cycle specific manner. The cleavage might be involved in the durability of the cell cycle delay. Post-translationally, acetylation at Lys-243 regulates its degradation and timing in anaphase entry. Ubiquitinated. Degraded by the proteasome. Ubiquitinated by UBR5, promoting disassembly of the mitotic checkpoint complex from the APC/C complex. In terms of processing, sumoylated with SUMO2 and SUMO3. The sumoylation mediates the association with CENPE at the kinetochore. Post-translationally, autophosphorylated in vitro. Intramolecular autophosphorylation stimulated by CENPE. Phosphorylated during mitosis and hyperphosphorylated in mitotically arrested cells. Phosphorylation at Ser-659 and Ser-1033 occurs at kinetochores upon mitotic entry with dephosphorylation at the onset of anaphase. Proteolytically cleaved by caspase-3 in a cell cycle specific manner. The cleavage might be involved in the durability of the cell cycle delay. Caspase-3 cleavage is associated with abrogation of the mitotic checkpoint. The major site of cleavage is at Asp-603. As to expression, highly expressed in thymus followed by spleen.

Its subcellular location is the cytoplasm. It is found in the nucleus. It localises to the chromosome. The protein resides in the centromere. The protein localises to the kinetochore. It carries out the reaction L-seryl-[protein] + ATP = O-phospho-L-seryl-[protein] + ADP + H(+). It catalyses the reaction L-threonyl-[protein] + ATP = O-phospho-L-threonyl-[protein] + ADP + H(+). Its activity is regulated as follows. Kinase activity stimulated by CENPE. Functionally, essential component of the mitotic checkpoint. Required for normal mitosis progression and tumor suppression. The mitotic checkpoint delays anaphase until all chromosomes are properly attached to the mitotic spindle. One of its checkpoint functions is to inhibit the activity of the anaphase-promoting complex/cyclosome (APC/C) by blocking the binding of CDC20 to APC/C, independently of its kinase activity. The other is to monitor kinetochore activities that depend on the kinetochore motor CENPE. Required for kinetochore localization of CENPE. Negatively regulates PLK1 activity in interphase cells and suppresses centrosome amplification. Also implicated in triggering apoptosis in polyploid cells that exit aberrantly from mitotic arrest. Essential for tumor suppression. May play a role in regulating aging and fertility. The chain is Mitotic checkpoint serine/threonine-protein kinase BUB1 beta (Bub1b) from Mus musculus (Mouse).